We begin with the raw amino-acid sequence, 119 residues long: Basic phospholipase A2 taipoxin alpha chain (119 aa).

7 disulfides stabilise this stretch: Cys11–Cys72, Cys27–Cys118, Cys29–Cys45, Cys44–Cys99, Cys51–Cys92, Cys61–Cys85, and Cys79–Cys90. Residues Tyr28, Gly30, and Gly32 each coordinate Ca(2+). His48 is an active-site residue. Asp49 contributes to the Ca(2+) binding site. Asp93 is an active-site residue.

The protein belongs to the phospholipase A2 family. Group I subfamily. D49 sub-subfamily. In terms of assembly, heterotrimer of alpha, beta, and gamma chains; non-covalently linked. Ca(2+) is required as a cofactor. In terms of tissue distribution, expressed by the venom gland.

It localises to the secreted. The catalysed reaction is a 1,2-diacyl-sn-glycero-3-phosphocholine + H2O = a 1-acyl-sn-glycero-3-phosphocholine + a fatty acid + H(+). Its function is as follows. Heterotrimer: Snake venom phospholipase A2 (PLA2) heterotrimer that acts as a potent presynaptic neurotoxin by blocking synaptic transmission and synaptic vesicle recycling. May act by binding in a calcium-dependent fashion to neurotonal pentraxin-1 (NPTX1) and neurotonal pentraxin-2 (NPTX2), but not to neuronal pentraxin receptor (NPTXR). Also binds to taipoxin-associated calcium binding protein 49 (RCN2), a protein localized in the lumen of endoplasmic reticulum. Functionally, monomer (alpha chain): Snake venom phospholipase A2 (PLA2) alpha chain that possesses the same high enzymatic activity as the heterotrimer. PLA2 catalyzes the calcium-dependent hydrolysis of the 2-acyl groups in 3-sn-phosphoglycerides. This chain is Basic phospholipase A2 taipoxin alpha chain, found in Oxyuranus scutellatus scutellatus (Australian taipan).